The chain runs to 294 residues: Phosphonoacetaldehyde hydrolase (294 aa).

Asp19 acts as the Nucleophile in catalysis. Positions 19 and 21 each coordinate Mg(2+). Lys60 acts as the Schiff-base intermediate with substrate in catalysis. Residue Asp193 participates in Mg(2+) binding.

The protein belongs to the HAD-like hydrolase superfamily. PhnX family. As to quaternary structure, homodimer. Mg(2+) serves as cofactor.

The enzyme catalyses phosphonoacetaldehyde + H2O = acetaldehyde + phosphate + H(+). In terms of biological role, involved in phosphonate degradation. The sequence is that of Phosphonoacetaldehyde hydrolase from Hahella chejuensis (strain KCTC 2396).